The sequence spans 214 residues: Ribonuclease T (214 aa).

Positions 20 to 195 (VVVDVETAGF…YDTQKTAELF (176 aa)) constitute an Exonuclease domain. 4 residues coordinate Mg(2+): Asp-23, Glu-25, His-182, and Asp-187. His-182 acts as the Proton donor/acceptor in catalysis.

Belongs to the RNase T family. Homodimer. Mg(2+) is required as a cofactor.

Trims short 3' overhangs of a variety of RNA species, leaving a one or two nucleotide 3' overhang. Responsible for the end-turnover of tRNA: specifically removes the terminal AMP residue from uncharged tRNA (tRNA-C-C-A). Also appears to be involved in tRNA biosynthesis. This is Ribonuclease T from Vibrio parahaemolyticus serotype O3:K6 (strain RIMD 2210633).